Reading from the N-terminus, the 79-residue chain is RNA-binding protein KhpA (79 aa).

The region spanning 32–79 is the KH domain; the sequence is FLEYHLNLDQSDVGRVIGRKGRTISAIRTIVYSVPTEYKKVRIVIDEK.

The protein belongs to the KhpA RNA-binding protein family. As to quaternary structure, forms a complex with KhpB. KhpA and KhpB colocalize throughout the cell cycle, with some increase at midcell in dividing cells.

It is found in the cytoplasm. In terms of biological role, a probable RNA chaperone. Forms a complex with KhpB which presumably binds to about 170 cellular RNAs (mRNA, tRNA intergenic RNA and sRNAs); the proteins alone each bind the same set of RNAs. A mutation in this gene suppresses the requirement for PBP2b (penA, a transpeptidase) in peripheral peptidoglycan (PG) synthesis. Probably plays a role in PG homeostasis and regulating peripheral PG synthesis. This Streptococcus pneumoniae serotype 2 (strain D39 / NCTC 7466) protein is RNA-binding protein KhpA.